Consider the following 611-residue polypeptide: Dihydroxy-acid dehydratase (611 aa).

Residue D81 coordinates Mg(2+). Position 122 (C122) interacts with [2Fe-2S] cluster. Residues D123 and K124 each coordinate Mg(2+). K124 carries the post-translational modification N6-carboxylysine. Position 195 (C195) interacts with [2Fe-2S] cluster. E491 lines the Mg(2+) pocket. S517 acts as the Proton acceptor in catalysis.

Belongs to the IlvD/Edd family. Homodimer. Requires [2Fe-2S] cluster as cofactor. It depends on Mg(2+) as a cofactor.

It catalyses the reaction (2R)-2,3-dihydroxy-3-methylbutanoate = 3-methyl-2-oxobutanoate + H2O. It carries out the reaction (2R,3R)-2,3-dihydroxy-3-methylpentanoate = (S)-3-methyl-2-oxopentanoate + H2O. It participates in amino-acid biosynthesis; L-isoleucine biosynthesis; L-isoleucine from 2-oxobutanoate: step 3/4. It functions in the pathway amino-acid biosynthesis; L-valine biosynthesis; L-valine from pyruvate: step 3/4. Functions in the biosynthesis of branched-chain amino acids. Catalyzes the dehydration of (2R,3R)-2,3-dihydroxy-3-methylpentanoate (2,3-dihydroxy-3-methylvalerate) into 2-oxo-3-methylpentanoate (2-oxo-3-methylvalerate) and of (2R)-2,3-dihydroxy-3-methylbutanoate (2,3-dihydroxyisovalerate) into 2-oxo-3-methylbutanoate (2-oxoisovalerate), the penultimate precursor to L-isoleucine and L-valine, respectively. In Brucella abortus (strain S19), this protein is Dihydroxy-acid dehydratase.